Here is a 419-residue protein sequence, read N- to C-terminus: rRNA methyltransferase 3, mitochondrial (419 aa).

The transit peptide at 1-39 (MAALCGGMLRGCILKPLGLSGSLQLKRNVRALRRTPVRV) directs the protein to the mitochondrion. Residues 42–68 (ADEEGRERKQVEASRQRQPRQNESQAC) form a disordered region. Positions 44–56 (EEGRERKQVEASR) are enriched in basic and acidic residues. 3 residues coordinate S-adenosyl-L-methionine: Gly357, Ile381, and Leu390.

The protein belongs to the class IV-like SAM-binding methyltransferase superfamily. RNA methyltransferase TrmH family.

It localises to the mitochondrion. It carries out the reaction a uridine in rRNA + S-adenosyl-L-methionine = a 2'-O-methyluridine in rRNA + S-adenosyl-L-homocysteine + H(+). Functionally, S-adenosyl-L-methionine-dependent 2'-O-ribose methyltransferase that catalyzes the formation of 2'-O-methylguanosine at position 1370 (Gm1370) in the mitochondrial large subunit ribosomal RNA (mtLSU rRNA), a conserved modification in the peptidyl transferase domain of the mtLSU rRNA. Also required for formation of 2'-O-methyluridine at position 1369 (Um1369) mediated by MRM2. The chain is rRNA methyltransferase 3, mitochondrial from Xenopus laevis (African clawed frog).